A 141-amino-acid polypeptide reads, in one-letter code: Nucleoside diphosphate kinase (141 aa).

Positions 9, 57, 85, 91, 102, and 112 each coordinate ATP. Residue histidine 115 is the Pros-phosphohistidine intermediate of the active site.

It belongs to the NDK family. In terms of assembly, homotetramer. The cofactor is Mg(2+).

The protein resides in the cytoplasm. It carries out the reaction a 2'-deoxyribonucleoside 5'-diphosphate + ATP = a 2'-deoxyribonucleoside 5'-triphosphate + ADP. The catalysed reaction is a ribonucleoside 5'-diphosphate + ATP = a ribonucleoside 5'-triphosphate + ADP. Major role in the synthesis of nucleoside triphosphates other than ATP. The ATP gamma phosphate is transferred to the NDP beta phosphate via a ping-pong mechanism, using a phosphorylated active-site intermediate. This is Nucleoside diphosphate kinase from Chlamydia trachomatis serovar A (strain ATCC VR-571B / DSM 19440 / HAR-13).